Reading from the N-terminus, the 343-residue chain is Tetraacyldisaccharide 4'-kinase (343 aa).

Position 65–72 (65–72 (HAGGTGKT)) interacts with ATP.

The protein belongs to the LpxK family.

The enzyme catalyses a lipid A disaccharide + ATP = a lipid IVA + ADP + H(+). The protein operates within glycolipid biosynthesis; lipid IV(A) biosynthesis; lipid IV(A) from (3R)-3-hydroxytetradecanoyl-[acyl-carrier-protein] and UDP-N-acetyl-alpha-D-glucosamine: step 6/6. Functionally, transfers the gamma-phosphate of ATP to the 4'-position of a tetraacyldisaccharide 1-phosphate intermediate (termed DS-1-P) to form tetraacyldisaccharide 1,4'-bis-phosphate (lipid IVA). The chain is Tetraacyldisaccharide 4'-kinase from Neisseria gonorrhoeae (strain ATCC 700825 / FA 1090).